A 114-amino-acid polypeptide reads, in one-letter code: T cell receptor beta variable 28 (114 aa).

Positions M1–S26 are cleaved as a signal peptide. The Ig-like domain occupies S27 to L114. A disulfide bridge links C42 with C110. A glycan (N-linked (GlcNAc...) asparagine) is linked at N103.

Alpha-beta TR is a heterodimer composed of an alpha and beta chain; disulfide-linked. The alpha-beta TR is associated with the transmembrane signaling CD3 coreceptor proteins to form the TR-CD3 (TcR or TCR). The assembly of alpha-beta TR heterodimers with CD3 occurs in the endoplasmic reticulum where a single alpha-beta TR heterodimer associates with one CD3D-CD3E heterodimer, one CD3G-CD3E heterodimer and one CD247 homodimer forming a stable octameric structure. CD3D-CD3E and CD3G-CD3E heterodimers preferentially associate with TR alpha and TR beta chains, respectively. The association of the CD247 homodimer is the last step of TcR assembly in the endoplasmic reticulum and is required for transport to the cell surface.

Its subcellular location is the cell membrane. Functionally, v region of the variable domain of T cell receptor (TR) beta chain that participates in the antigen recognition. Alpha-beta T cell receptors are antigen specific receptors which are essential to the immune response and are present on the cell surface of T lymphocytes. Recognize peptide-major histocompatibility (MH) (pMH) complexes that are displayed by antigen presenting cells (APC), a prerequisite for efficient T cell adaptive immunity against pathogens. Binding of alpha-beta TR to pMH complex initiates TR-CD3 clustering on the cell surface and intracellular activation of LCK that phosphorylates the ITAM motifs of CD3G, CD3D, CD3E and CD247 enabling the recruitment of ZAP70. In turn ZAP70 phosphorylates LAT, which recruits numerous signaling molecules to form the LAT signalosome. The LAT signalosome propagates signal branching to three major signaling pathways, the calcium, the mitogen-activated protein kinase (MAPK) kinase and the nuclear factor NF-kappa-B (NF-kB) pathways, leading to the mobilization of transcription factors that are critical for gene expression and essential for T cell growth and differentiation. The T cell repertoire is generated in the thymus, by V-(D)-J rearrangement. This repertoire is then shaped by intrathymic selection events to generate a peripheral T cell pool of self-MH restricted, non-autoaggressive T cells. Post-thymic interaction of alpha-beta TR with the pMH complexes shapes TR structural and functional avidity. This chain is T cell receptor beta variable 28, found in Homo sapiens (Human).